A 327-amino-acid chain; its full sequence is Olfactory receptor 226 (327 aa).

Over 1–26 (MERRNHSGRVSEFVLLGFPAPAPLRV) the chain is Extracellular. Residue N5 is glycosylated (N-linked (GlcNAc...) asparagine). A helical membrane pass occupies residues 27-50 (LLFFLSLLAYVLVLTENMLIIIAI). At 51-58 (RNHPTLHK) the chain is on the cytoplasmic side. Residues 59–80 (PMYFFLANMSFLEIWYVTVTIP) traverse the membrane as a helical segment. Residues 81–104 (KMLAGFIGSKENHGQLISFEACMT) lie on the Extracellular side of the membrane. C102 and C194 are joined by a disulfide. A helical transmembrane segment spans residues 105-125 (QLYFFLGLGCTECVLLAVMAY). Topologically, residues 126–144 (DRYVAICHPLHYPVIVSSR) are cytoplasmic. Residues 145–163 (LCVQMAAGSWAGGFGISMV) form a helical membrane-spanning segment. The Extracellular portion of the chain corresponds to 164 to 201 (KVFLISRLSYCGPNTINHFFCDVSPLLNLSCTDMSTAE). The helical transmembrane segment at 202–224 (LTDFVLAIFILLGPLSVTGASYM) threads the bilayer. The Cytoplasmic segment spans residues 225-241 (AITGAVMRIPSAAGRHK). The helical transmembrane segment at 242 to 265 (AFSTCASHLTVVIIFYAASIFIYA) threads the bilayer. Topologically, residues 266 to 277 (RPKALSAFDTNK) are extracellular. A helical membrane pass occupies residues 278 to 297 (LVSVLYAVIVPLFNPIIYCL). The Cytoplasmic segment spans residues 298–327 (RNQDVKRALRRTLHLAQDQEANTNKGSKNG).

The protein belongs to the G-protein coupled receptor 1 family. In terms of tissue distribution, olfactory epithelium.

It localises to the cell membrane. Functionally, odorant receptor. This is Olfactory receptor 226 (Olr226) from Rattus norvegicus (Rat).